A 2325-amino-acid polypeptide reads, in one-letter code: Otogelin-like protein (2325 aa).

A signal peptide spans 1-22; the sequence is MVPWRALSLPILLVSLRGYVCA. Positions 112–288 constitute a VWFD 1 domain; the sequence is GICKTWGQYH…VLTPDDTKCV (177 aa). Intrachain disulfides connect cysteine 114/cysteine 248 and cysteine 136/cysteine 287. An N-linked (GlcNAc...) asparagine glycan is attached at asparagine 425. Residues 472–645 form the VWFD 2 domain; it reads VQCSVVGDSH…HAWRVSSTCF (174 aa). 3 disulfide bridges follow: cysteine 474-cysteine 609, cysteine 496-cysteine 644, and cysteine 518-cysteine 526. Residues 736–791 form the TIL 1 domain; the sequence is CQKGMLYHHCSSLCLRSCTSLSSPEQCKDDCAEGCNCPEGKFYEETLNFCVPIYHC. Asparagine 817 and asparagine 867 each carry an N-linked (GlcNAc...) asparagine glycan. One can recognise a VWFD 3 domain in the interval 937–1114; the sequence is AVCTVYGDRH…DLMEALKPCE (178 aa). Cystine bridges form between cysteine 939-cysteine 1069, cysteine 961-cysteine 1113, and cysteine 983-cysteine 990. N-linked (GlcNAc...) asparagine glycosylation is present at asparagine 1280. The TIL 2 domain maps to 1366-1418; the sequence is RYEPCATPCFKTCSDPEALACTFLPPVEGCLPYCPKNMILDETTLKCVHPEDC. Positions 1506–1695 constitute a VWFD 4 domain; it reads CRCSMLSELS…SWEIEKSFEV (190 aa). Cystine bridges form between cysteine 1508-cysteine 1655 and cysteine 1549-cysteine 1571. 2 N-linked (GlcNAc...) asparagine glycosylation sites follow: asparagine 1576 and asparagine 2170. 4 disulfide bridges follow: cysteine 2233–cysteine 2289, cysteine 2254–cysteine 2303, cysteine 2265–cysteine 2320, and cysteine 2269–cysteine 2322. The 93-residue stretch at 2233-2325 folds into the CTCK domain; the sequence is CKREERICQK…EPIDCTCQWN (93 aa). The N-linked (GlcNAc...) asparagine glycan is linked to asparagine 2296.

The protein belongs to the otogelin family.

The protein resides in the secreted. In Mus musculus (Mouse), this protein is Otogelin-like protein (Otogl).